A 262-amino-acid chain; its full sequence is Homeobox protein Nkx-6.3 (262 aa).

The homeobox DNA-binding region spans 140–199 (KKHTRPTFTGHQIFALEKTFEQTKYLAGPERARLAYSLGMTESQVKVWFQNRRTKWRKKS). The segment at 197–237 (KKSALEPSSSTPRAPGGASGDRAASENEDDEYNKPLDPDSD) is disordered.

Expressed in the developing CNS and gastro-intestinal tract.

It localises to the nucleus. Putative transcription factor, which may be involved in patterning of central nervous system and pancreas. The sequence is that of Homeobox protein Nkx-6.3 (Nkx6-3) from Mus musculus (Mouse).